Reading from the N-terminus, the 366-residue chain is Ribosomal RNA large subunit methyltransferase M (366 aa).

S-adenosyl-L-methionine contacts are provided by residues serine 188, 221–224 (CPGG), aspartate 240, aspartate 260, and aspartate 277. Lysine 306 serves as the catalytic Proton acceptor.

It belongs to the class I-like SAM-binding methyltransferase superfamily. RNA methyltransferase RlmE family. RlmM subfamily. Monomer.

It localises to the cytoplasm. The catalysed reaction is cytidine(2498) in 23S rRNA + S-adenosyl-L-methionine = 2'-O-methylcytidine(2498) in 23S rRNA + S-adenosyl-L-homocysteine + H(+). Its function is as follows. Catalyzes the 2'-O-methylation at nucleotide C2498 in 23S rRNA. This is Ribosomal RNA large subunit methyltransferase M from Photorhabdus laumondii subsp. laumondii (strain DSM 15139 / CIP 105565 / TT01) (Photorhabdus luminescens subsp. laumondii).